Here is a 308-residue protein sequence, read N- to C-terminus: Ribosomal RNA large subunit methyltransferase F (308 aa).

It belongs to the methyltransferase superfamily. METTL16/RlmF family.

The protein localises to the cytoplasm. It carries out the reaction adenosine(1618) in 23S rRNA + S-adenosyl-L-methionine = N(6)-methyladenosine(1618) in 23S rRNA + S-adenosyl-L-homocysteine + H(+). Specifically methylates the adenine in position 1618 of 23S rRNA. The sequence is that of Ribosomal RNA large subunit methyltransferase F from Escherichia coli O157:H7.